Consider the following 398-residue polypeptide: MDGVTPTLSTIRGRTLESSTLHVTPRSLDRNKDQITNIFSGFAGLLAILLVVAVFCILWNWNKRKKRQVPYLRVTVMPLLTLPQTRQRAKNIYDILPWRQEDLGRHESRSMRIFSTESLLSRNSESPEHVPSQAGNAFQEHTAHIHATEYAVGIYDNAMVPQMCGNLTPSAHCINVRASRDCASISSEDSHDYVNVPTAEEIAETLASTKSPSRNLFVLPSTQKLEFTEERDEGCGDAGDCTSLYSPGAEDSDSLSNGEGSSQISNDYVNMTGLDLSAIQERQLWVAFQCCRDYENVPAADPSGSQQQAEKDVPSSNIGHVEDKTDDPGTHVQCVKRTFLASGDYADFQPFTQSEDSQMKHREEMSNEDSSDYENVLTAKLGGRDSEQGPGTQLLPDE.

At 1–37 (MDGVTPTLSTIRGRTLESSTLHVTPRSLDRNKDQITN) the chain is on the extracellular side. Residues 38–58 (IFSGFAGLLAILLVVAVFCIL) traverse the membrane as a helical; Signal-anchor for type III membrane protein segment. Residues 59–398 (WNWNKRKKRQ…GPGTQLLPDE (340 aa)) are Cytoplasmic-facing. A Phosphotyrosine modification is found at Y193. A disordered region spans residues 228–261 (TEERDEGCGDAGDCTSLYSPGAEDSDSLSNGEGS). 2 positions are modified to phosphotyrosine: Y268 and Y294. Positions 298–330 (PAADPSGSQQQAEKDVPSSNIGHVEDKTDDPGT) are disordered. The segment covering 303-318 (SGSQQQAEKDVPSSNI) has biased composition (polar residues). Over residues 320-329 (HVEDKTDDPG) the composition is skewed to basic and acidic residues. A phosphotyrosine mark is found at Y345 and Y373. The tract at residues 347-398 (DFQPFTQSEDSQMKHREEMSNEDSSDYENVLTAKLGGRDSEQGPGTQLLPDE) is disordered.

When phosphorylated, interacts with GRB2, PIK3R1 and GRAP2. Post-translationally, phosphorylated on tyrosines by Syk, Lck or ZAP70 upon TCR or BCR activation; which leads to the recruitment of GRB2, PIK3R1 and GRAP2. As to expression, expressed in spleen, thymus, and peripheral blood leukocytes. Expressed in several B-, T-, NK and monocyte cell lines.

The protein localises to the cell membrane. Negatively regulates TCR (T-cell antigen receptor)-mediated signaling in T-cells and BCR (B-cell antigen receptor)-mediated signaling in B-cells. This chain is Lymphocyte transmembrane adapter 1 (LAX1), found in Homo sapiens (Human).